We begin with the raw amino-acid sequence, 829 residues long: Probable methyltransferase PMT26 (829 aa).

Topologically, residues Met1–Asn17 are cytoplasmic. A helical; Signal-anchor for type II membrane protein membrane pass occupies residues Tyr18–Met38. At Thr39 to Gly829 the chain is on the lumenal side. Residues Asp55–Ala258 are disordered. 4 stretches are compositionally biased toward basic and acidic residues: residues Asn85 to Ser143, Leu151 to Asn160, Thr168 to Thr177, and Glu187 to Thr231. N-linked (GlcNAc...) asparagine glycans are attached at residues Asn215, Asn247, Asn264, and Asn270. The segment covering Gln241 to Asp252 has biased composition (polar residues). Positions Gly271–Gly291 are disordered. Residues Ser280–Gly291 are compositionally biased toward basic and acidic residues. N-linked (GlcNAc...) asparagine glycosylation is found at Asn302, Asn579, Asn595, and Asn756.

Belongs to the methyltransferase superfamily.

The protein resides in the golgi apparatus membrane. This chain is Probable methyltransferase PMT26, found in Arabidopsis thaliana (Mouse-ear cress).